We begin with the raw amino-acid sequence, 349 residues long: MNGTEGNNFYIPMSNRTGLVRSPYEYPQYYLAEPWQFKLLAVYMFFLMCFGFPINGLTLVVTAQHKKLRQPLNFILVNLAVAGTIMVCFGFTVTFYTAINGYFVLGPTGCAIEGFMATLGGQISLWSLVVLAIERYIVVCKPMGSFKFSSNHAFAGIGFTWIMALSCAAPPLVGWSRYIPEGMQCSCGPDYYTLNPDYNNESYVLYMFCCHFIFPVTTIFFTYGRLVCTVKAAAAQQQESESTQKAEREVTRMVILMVLGFLVAWTPYASVAAWIFFNRGAAFSAQFMAVPAFFSKSSSIFNPIIYVLLNKQFRNCMLTTLFCGKNPLGDDESSTVSTSKTEVSSVSPA.

Over Met1–Gln36 the chain is Extracellular. Residues Asn2 and Asn15 are each glycosylated (N-linked (GlcNAc...) asparagine). Residues Phe37–Val61 form a helical membrane-spanning segment. At Thr62 to Asn73 the chain is on the cytoplasmic side. The chain crosses the membrane as a helical span at residues Phe74 to Ile99. Residues Asn100–Glu113 are Extracellular-facing. Cys110 and Cys187 are joined by a disulfide. Residues Gly114–Ile133 form a helical membrane-spanning segment. Residues Glu134–His152 lie on the Cytoplasmic side of the membrane. A helical membrane pass occupies residues Ala153–Ser176. Residues Arg177 to Ser202 are Extracellular-facing. An N-linked (GlcNAc...) asparagine glycan is attached at Asn200. Residues Tyr203–Val230 traverse the membrane as a helical segment. Residues Lys231–Arg252 are Cytoplasmic-facing. The chain crosses the membrane as a helical span at residues Met253 to Phe276. Over Phe277–Ser284 the chain is Extracellular. Residues Ala285–Leu309 traverse the membrane as a helical segment. Residue Lys296 is modified to N6-(retinylidene)lysine. Residues Asn310–Ala349 lie on the Cytoplasmic side of the membrane. The disordered stretch occupies residues Gly329–Ala349. Residues Ser334–Ala349 show a composition bias toward low complexity.

Belongs to the G-protein coupled receptor 1 family. Opsin subfamily. Post-translationally, phosphorylated on some or all of the serine and threonine residues present in the C-terminal region.

It is found in the membrane. In terms of biological role, visual pigments are the light-absorbing molecules that mediate vision. They consist of an apoprotein, opsin, covalently linked to cis-retinal. In Danio rerio (Zebrafish), this protein is Green-sensitive opsin-3 (opn1mw3).